The sequence spans 309 residues: HPr kinase/phosphorylase (309 aa).

Catalysis depends on residues His138 and Lys159. 153-160 (GKSGVGKS) lines the ATP pocket. Ser160 contributes to the Mg(2+) binding site. Asp177 functions as the Proton acceptor; for phosphorylation activity. Proton donor; for dephosphorylation activity in the catalytic mechanism. The segment at 201–210 (LEIRGLGIIN) is important for the catalytic mechanism of both phosphorylation and dephosphorylation. Residue Glu202 participates in Mg(2+) binding. Residue Arg243 is part of the active site. An important for the catalytic mechanism of dephosphorylation region spans residues 264 to 269 (PVRPGR).

This sequence belongs to the HPrK/P family. In terms of assembly, homohexamer. The cofactor is Mg(2+).

The catalysed reaction is [HPr protein]-L-serine + ATP = [HPr protein]-O-phospho-L-serine + ADP + H(+). It catalyses the reaction [HPr protein]-O-phospho-L-serine + phosphate + H(+) = [HPr protein]-L-serine + diphosphate. Catalyzes the ATP- as well as the pyrophosphate-dependent phosphorylation of a specific serine residue in HPr, a phosphocarrier protein of the phosphoenolpyruvate-dependent sugar phosphotransferase system (PTS). HprK/P also catalyzes the pyrophosphate-producing, inorganic phosphate-dependent dephosphorylation (phosphorolysis) of seryl-phosphorylated HPr (P-Ser-HPr). The two antagonistic activities of HprK/P are regulated by several intracellular metabolites, which change their concentration in response to the absence or presence of rapidly metabolisable carbon sources (glucose, fructose, etc.) in the growth medium. Also phosphorylates/dephosphorylates the HPr-like catabolite repression protein crh on a specific serine residue. Therefore, by controlling the phosphorylation state of HPr and crh, HPrK/P is a sensor enzyme that plays a major role in the regulation of carbon metabolism and sugar transport: it mediates carbon catabolite repression (CCR), and regulates PTS-catalyzed carbohydrate uptake and inducer exclusion. This chain is HPr kinase/phosphorylase, found in Geobacillus thermodenitrificans (strain NG80-2).